The chain runs to 82 residues: Lectin-D2 (82 aa).

Chitin-binding type-1 domains follow at residues 1-42 (APEC…QCDY) and 43-82 (WRCGRDFGGRLCEEDMCCSKYGWCGYSDDHCEDGCQSQCD). Disulfide bonds link Cys-4-Cys-19, Cys-13-Cys-25, Cys-18-Cys-32, and Cys-36-Cys-40. The a carbohydrate site is built by Ser-20, Trp-22, Tyr-24, and Tyr-31. Trp-43 contributes to the a carbohydrate binding site. Disulfide bonds link Cys-45–Cys-60, Cys-54–Cys-66, Cys-59–Cys-73, and Cys-77–Cys-81. 4 residues coordinate a carbohydrate: Ser-61, Tyr-63, Trp-65, and His-72.

As to quaternary structure, monomer.

Its function is as follows. N-acetyl-D-glucosamine binding lectin. Shows no hemagglutinating activity towards rabbit erythrocytes and weak activity towards trypsin-treated erythrocytes. Has mitogenic activity towards human peripheral blood lymphocytes (HPBL). This chain is Lectin-D2, found in Phytolacca americana (American pokeweed).